A 407-amino-acid chain; its full sequence is Serine/threonine transporter SstT (407 aa).

9 helical membrane-spanning segments follow: residues 14-34, 48-68, 82-102, 141-161, 192-212, 216-236, 290-310, 316-336, and 363-383; these read GSLV…ATVS, FVGA…AASI, IVIL…LMSF, AVLT…GLAL, IGIF…AIAG, LLLV…PAIV, IPLG…ILTL, MGIQ…GVSA, and VAMQ…SAET.

It belongs to the dicarboxylate/amino acid:cation symporter (DAACS) (TC 2.A.23) family.

It is found in the cell inner membrane. The enzyme catalyses L-serine(in) + Na(+)(in) = L-serine(out) + Na(+)(out). It catalyses the reaction L-threonine(in) + Na(+)(in) = L-threonine(out) + Na(+)(out). Functionally, involved in the import of serine and threonine into the cell, with the concomitant import of sodium (symport system). This is Serine/threonine transporter SstT from Shewanella halifaxensis (strain HAW-EB4).